The chain runs to 133 residues: Interferon alpha-inducible protein 27-like protein 2 (133 aa).

The next 3 helical transmembrane spans lie at 8–28 (AAIGGALAVAAVPAVLGAVGF), 51–71 (GGGVAAGSLVATLQSVGAAGL), and 73–93 (TSSNILLGSIGSAFGALLGGA). The interval 93–133 (AKRASPSPPPGGPRPEGEQPGENVPQVEPPKSPLGPEKHEK) is disordered.

This sequence belongs to the IFI6/IFI27 family.

Its subcellular location is the mitochondrion membrane. Functionally, plays a role in the apoptotic process and has a pro-apoptotic activity. This is Interferon alpha-inducible protein 27-like protein 2 from Bos taurus (Bovine).